We begin with the raw amino-acid sequence, 333 residues long: tRNA-dihydrouridine(16) synthase (333 aa).

Residues 19 to 21 and Gln80 contribute to the FMN site; that span reads PMQ. Cys110 functions as the Proton donor in the catalytic mechanism. Residues Lys151, 211 to 213, and 235 to 236 each bind FMN; these read NGD and GR.

It belongs to the Dus family. DusC subfamily. FMN is required as a cofactor.

The catalysed reaction is 5,6-dihydrouridine(16) in tRNA + NADP(+) = uridine(16) in tRNA + NADPH + H(+). It catalyses the reaction 5,6-dihydrouridine(16) in tRNA + NAD(+) = uridine(16) in tRNA + NADH + H(+). Its function is as follows. Catalyzes the synthesis of 5,6-dihydrouridine (D), a modified base found in the D-loop of most tRNAs, via the reduction of the C5-C6 double bond in target uridines. Specifically modifies U16 in tRNAs. This chain is tRNA-dihydrouridine(16) synthase, found in Neisseria meningitidis serogroup A / serotype 4A (strain DSM 15465 / Z2491).